A 1393-amino-acid polypeptide reads, in one-letter code: Polarized growth protein RAX2 (1393 aa).

The N-terminal stretch at 1–21 (MLVQFQQLLLLLISIIKLCQA) is a signal peptide. Over 22–1329 (DDNDNSFFQP…TNKNLSRGKV (1308 aa)) the chain is Extracellular. N-linked (GlcNAc...) asparagine glycosylation is found at Asn62, Asn85, Asn105, Asn125, Asn133, Asn139, Asn164, Asn186, Asn195, Asn212, Asn256, Asn260, Asn266, Asn269, Asn362, Asn398, Asn405, Asn479, Asn536, Asn542, Asn565, Asn599, Asn646, Asn649, Asn653, Asn674, Asn689, Asn696, Asn702, Asn714, Asn747, Asn764, Asn768, Asn792, Asn829, Asn863, Asn899, Asn935, Asn946, Asn958, Asn985, Asn1020, Asn1030, Asn1041, Asn1213, Asn1232, Asn1262, and Asn1323. Residues 1330 to 1350 (VGISLACALGSTTLLGLLYII) traverse the membrane as a helical segment. Topologically, residues 1351-1393 (PYFALFKNRKDGYFQPERIHEDEMMDAVNPEDLLHEIDLQREK) are cytoplasmic.

The protein belongs to the RAX2 family.

Its subcellular location is the cell membrane. The protein localises to the cell tip. Functionally, required for establishing sites of emergence of yeast and hyphal daughters and for maintaining the linearity of hyphal growth, but not involved in responses that require a reorientation of the direction of already established hyphal growth (tropisms). Does not play a role in penetration or injury of human epithelial cells. This chain is Polarized growth protein RAX2, found in Candida albicans (strain SC5314 / ATCC MYA-2876) (Yeast).